Consider the following 290-residue polypeptide: Pyridoxal kinase PdxY (290 aa).

Residues serine 12 and 47 to 48 contribute to the substrate site; that span reads TQ. ATP is bound by residues aspartate 114, glutamate 151, lysine 184, and 211-214; that span reads RPLL. A substrate-binding site is contributed by aspartate 225.

This sequence belongs to the pyridoxine kinase family. PdxY subfamily. Homodimer. Mg(2+) serves as cofactor.

The catalysed reaction is pyridoxal + ATP = pyridoxal 5'-phosphate + ADP + H(+). The protein operates within cofactor metabolism; pyridoxal 5'-phosphate salvage; pyridoxal 5'-phosphate from pyridoxal: step 1/1. Functionally, pyridoxal kinase involved in the salvage pathway of pyridoxal 5'-phosphate (PLP). Catalyzes the phosphorylation of pyridoxal to PLP. This is Pyridoxal kinase PdxY from Pseudomonas putida (strain ATCC 700007 / DSM 6899 / JCM 31910 / BCRC 17059 / LMG 24140 / F1).